Consider the following 122-residue polypeptide: Immunoglobulin lambda variable 8-61 (122 aa).

Positions 1-24 (MSVPTMAWMMLLLGLLAYGSGVDS) are cleaved as a signal peptide. The framework-1 stretch occupies residues 25–49 (QTVVTQEPSFSVSPGGTVTLTCGLS). An Ig-like domain is found at 25–122 (QTVVTQEPSF…YCVLYMGSGI (98 aa)). The cysteines at positions 46 and 114 are disulfide-linked. The segment at 50–58 (SGSVSTSYY) is complementarity-determining-1. Positions 59–75 (PSWYQQTPGQAPRTLIY) are framework-2. Residues 76 to 78 (STN) form a complementarity-determining-2 region. The tract at residues 79 to 114 (TRSSGVPDRFSGSILGNKAALTITGAQADDESDYYC) is framework-3. Positions 115-122 (VLYMGSGI) are complementarity-determining-3.

As to quaternary structure, immunoglobulins are composed of two identical heavy chains and two identical light chains; disulfide-linked.

Its subcellular location is the secreted. It is found in the cell membrane. In terms of biological role, v region of the variable domain of immunoglobulin light chains that participates in the antigen recognition. Immunoglobulins, also known as antibodies, are membrane-bound or secreted glycoproteins produced by B lymphocytes. In the recognition phase of humoral immunity, the membrane-bound immunoglobulins serve as receptors which, upon binding of a specific antigen, trigger the clonal expansion and differentiation of B lymphocytes into immunoglobulins-secreting plasma cells. Secreted immunoglobulins mediate the effector phase of humoral immunity, which results in the elimination of bound antigens. The antigen binding site is formed by the variable domain of one heavy chain, together with that of its associated light chain. Thus, each immunoglobulin has two antigen binding sites with remarkable affinity for a particular antigen. The variable domains are assembled by a process called V-(D)-J rearrangement and can then be subjected to somatic hypermutations which, after exposure to antigen and selection, allow affinity maturation for a particular antigen. The protein is Immunoglobulin lambda variable 8-61 of Homo sapiens (Human).